Consider the following 470-residue polypeptide: Ribosomal protein uS12 methylthiotransferase RimO (470 aa).

In terms of domain architecture, MTTase N-terminal spans 20–131; it reads PTVAFAHLGC…IVEVLQQVEA (112 aa). The [4Fe-4S] cluster site is built by Cys-29, Cys-65, Cys-94, Cys-169, Cys-173, and Cys-176. The 230-residue stretch at 155-384 folds into the Radical SAM core domain; that stretch reads TTGEAVAYLK…MTLQQPISAA (230 aa). The TRAM domain maps to 387–458; the sequence is ASWIGKTVDV…IYDLSGHVVS (72 aa).

The protein belongs to the methylthiotransferase family. RimO subfamily. It depends on [4Fe-4S] cluster as a cofactor.

The protein localises to the cytoplasm. The catalysed reaction is L-aspartate(89)-[ribosomal protein uS12]-hydrogen + (sulfur carrier)-SH + AH2 + 2 S-adenosyl-L-methionine = 3-methylsulfanyl-L-aspartate(89)-[ribosomal protein uS12]-hydrogen + (sulfur carrier)-H + 5'-deoxyadenosine + L-methionine + A + S-adenosyl-L-homocysteine + 2 H(+). In terms of biological role, catalyzes the methylthiolation of an aspartic acid residue of ribosomal protein uS12. The protein is Ribosomal protein uS12 methylthiotransferase RimO of Synechococcus sp. (strain CC9311).